Consider the following 56-residue polypeptide: Small ribosomal subunit protein bS21 (56 aa).

This sequence belongs to the bacterial ribosomal protein bS21 family.

In Geobacillus stearothermophilus (Bacillus stearothermophilus), this protein is Small ribosomal subunit protein bS21 (rpsU).